Consider the following 415-residue polypeptide: MQFLPKADPEIFAALKKEDERQENNLEMIASENFVSRAVLEAYTSTLTNKYAEGYPGKRYYNGCHNADVVETLAIERAKKLFGSQYANVQPHSGAQANMAVFLACLEPGDSFLGMNLAHGGHLTHGSPVNVSGKIYKPIPYGVDSKTETINYDEVAKLAREHKPKLIVAGASAYARTIDFSKFAEIAKEVGAKLMADIAHISGLVATGYHPSPIGMFDFVTTTTHKTLRGPRGGLILSTLENEKVLNSRVFPGIQGGPLMHVIAAKAVAFQEALQPDYKKYIETVLANAKTLAEVFVKRGYRVVSGGTDNHLVLLDVSVKGLTGAQAADGLDEVGVTVNKNAIPFDKNPPAVASGIRLGTPALTTRGLKPADMETVGNLICDFLDHPNDDKNRTKVKGGIQEMTQKFPMNQFRLD.

Residues Leu-117 and 121-123 (GHL) contribute to the (6S)-5,6,7,8-tetrahydrofolate site. Lys-226 is subject to N6-(pyridoxal phosphate)lysine.

The protein belongs to the SHMT family. In terms of assembly, homodimer. The cofactor is pyridoxal 5'-phosphate.

The protein resides in the cytoplasm. The enzyme catalyses (6R)-5,10-methylene-5,6,7,8-tetrahydrofolate + glycine + H2O = (6S)-5,6,7,8-tetrahydrofolate + L-serine. Its pathway is one-carbon metabolism; tetrahydrofolate interconversion. It participates in amino-acid biosynthesis; glycine biosynthesis; glycine from L-serine: step 1/1. Functionally, catalyzes the reversible interconversion of serine and glycine with tetrahydrofolate (THF) serving as the one-carbon carrier. This reaction serves as the major source of one-carbon groups required for the biosynthesis of purines, thymidylate, methionine, and other important biomolecules. Also exhibits THF-independent aldolase activity toward beta-hydroxyamino acids, producing glycine and aldehydes, via a retro-aldol mechanism. This chain is Serine hydroxymethyltransferase, found in Leptospira interrogans serogroup Icterohaemorrhagiae serovar copenhageni (strain Fiocruz L1-130).